Consider the following 255-residue polypeptide: Large ribosomal subunit protein eL8 (255 aa).

A compositionally biased stretch (basic residues) spans 1-16 (MPKAPKKITKPKKAEK). The interval 1–28 (MPKAPKKITKPKKAEKKKNPLFQAKPRS) is disordered.

The protein belongs to the eukaryotic ribosomal protein eL8 family.

In Tetrahymena thermophila, this protein is Large ribosomal subunit protein eL8 (RPL7A).